The primary structure comprises 562 residues: Exonuclease subunit 2 (562 aa).

Residue 36 to 43 (GKNGGGKS) coordinates ATP.

To phage T5 protein D13 and to yeast RAD52. In terms of assembly, consists of two subunits: Gp47 and Gp46.

Functionally, exonuclease involved in phage DNA recombination, replication, and repair. This Escherichia phage RB69 (Bacteriophage RB69) protein is Exonuclease subunit 2 (46).